The primary structure comprises 174 residues: Larval cuticle protein A1A (174 aa).

2 tandem repeats follow at residues 45 to 48 (AAPV) and 67 to 70 (AAPV). Residues 84–150 (NPQYSFGYDV…AVVHREPLVA (67 aa)) enclose the Chitin-binding type R&amp;R domain. The stretch at 155-158 (AAPA) is repeat 3.

In terms of biological role, component of the cuticle of the larva of Tenebrio molitor. The polypeptide is Larval cuticle protein A1A (Tenebrio molitor (Yellow mealworm beetle)).